We begin with the raw amino-acid sequence, 353 residues long: UDP-3-O-acylglucosamine N-acyltransferase (353 aa).

Catalysis depends on His-242, which acts as the Proton acceptor.

Belongs to the transferase hexapeptide repeat family. LpxD subfamily. Homotrimer.

It catalyses the reaction a UDP-3-O-[(3R)-3-hydroxyacyl]-alpha-D-glucosamine + a (3R)-hydroxyacyl-[ACP] = a UDP-2-N,3-O-bis[(3R)-3-hydroxyacyl]-alpha-D-glucosamine + holo-[ACP] + H(+). Its pathway is bacterial outer membrane biogenesis; LPS lipid A biosynthesis. Its function is as follows. Catalyzes the N-acylation of UDP-3-O-acylglucosamine using 3-hydroxyacyl-ACP as the acyl donor. Is involved in the biosynthesis of lipid A, a phosphorylated glycolipid that anchors the lipopolysaccharide to the outer membrane of the cell. The chain is UDP-3-O-acylglucosamine N-acyltransferase from Pseudomonas aeruginosa (strain UCBPP-PA14).